The chain runs to 250 residues: Probable transcriptional regulatory protein DIP1378 (250 aa).

The segment at 1-22 (MSGHSKWATTKHKKAANDAKRG) is disordered.

It belongs to the TACO1 family.

Its subcellular location is the cytoplasm. The protein is Probable transcriptional regulatory protein DIP1378 of Corynebacterium diphtheriae (strain ATCC 700971 / NCTC 13129 / Biotype gravis).